Reading from the N-terminus, the 719-residue chain is Pesticidal crystal protein Cry1Id (719 aa).

The protein belongs to the delta endotoxin family.

In terms of biological role, promotes colloidosmotic lysis by binding to the midgut epithelial cells of many lepidopteran larvae. Active on Plutella xylostella and on Bombyx mori. This is Pesticidal crystal protein Cry1Id (cry1Id) from Bacillus thuringiensis.